The primary structure comprises 427 residues: 3-phosphoshikimate 1-carboxyvinyltransferase (427 aa).

Residues Lys20, Ser21, and Arg25 each contribute to the 3-phosphoshikimate site. Lys20 lines the phosphoenolpyruvate pocket. Phosphoenolpyruvate is bound by residues Gly92 and Arg120. 4 residues coordinate 3-phosphoshikimate: Ser166, Gln168, Asp312, and Lys339. Gln168 lines the phosphoenolpyruvate pocket. The Proton acceptor role is filled by Asp312. Arg343 and Arg385 together coordinate phosphoenolpyruvate.

Belongs to the EPSP synthase family. In terms of assembly, monomer.

Its subcellular location is the cytoplasm. It carries out the reaction 3-phosphoshikimate + phosphoenolpyruvate = 5-O-(1-carboxyvinyl)-3-phosphoshikimate + phosphate. It functions in the pathway metabolic intermediate biosynthesis; chorismate biosynthesis; chorismate from D-erythrose 4-phosphate and phosphoenolpyruvate: step 6/7. Functionally, catalyzes the transfer of the enolpyruvyl moiety of phosphoenolpyruvate (PEP) to the 5-hydroxyl of shikimate-3-phosphate (S3P) to produce enolpyruvyl shikimate-3-phosphate and inorganic phosphate. In Streptococcus equi subsp. zooepidemicus (strain H70), this protein is 3-phosphoshikimate 1-carboxyvinyltransferase.